The sequence spans 276 residues: SKA complex subunit 1 homolog (276 aa).

Residues 48 to 78 (VDVSLTAMEAQLQAVRRRLQEEREAFPKAKK) are a coiled coil.

Belongs to the SKA1 family.

The protein is SKA complex subunit 1 homolog of Oryza sativa subsp. japonica (Rice).